We begin with the raw amino-acid sequence, 323 residues long: Methionyl-tRNA formyltransferase (323 aa).

113-116 lines the (6S)-5,6,7,8-tetrahydrofolate pocket; sequence SLLP.

This sequence belongs to the Fmt family.

The catalysed reaction is L-methionyl-tRNA(fMet) + (6R)-10-formyltetrahydrofolate = N-formyl-L-methionyl-tRNA(fMet) + (6S)-5,6,7,8-tetrahydrofolate + H(+). Functionally, attaches a formyl group to the free amino group of methionyl-tRNA(fMet). The formyl group appears to play a dual role in the initiator identity of N-formylmethionyl-tRNA by promoting its recognition by IF2 and preventing the misappropriation of this tRNA by the elongation apparatus. This is Methionyl-tRNA formyltransferase from Porphyromonas gingivalis (strain ATCC 33277 / DSM 20709 / CIP 103683 / JCM 12257 / NCTC 11834 / 2561).